The chain runs to 366 residues: tRNA-specific 2-thiouridylase MnmA (366 aa).

ATP is bound by residues 10–17 (GLSGGVDS) and M36. An interaction with target base in tRNA region spans residues 96–98 (NPD). The Nucleophile role is filled by C101. A disulfide bond links C101 and C197. Residue G125 participates in ATP binding. The segment at 147–149 (KDQ) is interaction with tRNA. C197 serves as the catalytic Cysteine persulfide intermediate. The interval 309–310 (RY) is interaction with tRNA.

The protein belongs to the MnmA/TRMU family.

It localises to the cytoplasm. The enzyme catalyses S-sulfanyl-L-cysteinyl-[protein] + uridine(34) in tRNA + AH2 + ATP = 2-thiouridine(34) in tRNA + L-cysteinyl-[protein] + A + AMP + diphosphate + H(+). Catalyzes the 2-thiolation of uridine at the wobble position (U34) of tRNA, leading to the formation of s(2)U34. This is tRNA-specific 2-thiouridylase MnmA from Alkalilimnicola ehrlichii (strain ATCC BAA-1101 / DSM 17681 / MLHE-1).